A 113-amino-acid polypeptide reads, in one-letter code: Ribulose bisphosphate carboxylase small subunit (113 aa).

It belongs to the RuBisCO small chain family. Heterohexadecamer of 8 large and 8 small subunits. Forms a CsoS2-CsoS1-RuBisCO complex.

It is found in the carboxysome. In terms of biological role, ruBisCO catalyzes two reactions: the carboxylation of D-ribulose 1,5-bisphosphate, the primary event in carbon dioxide fixation, as well as the oxidative fragmentation of the pentose substrate in the photorespiration process. Both reactions occur simultaneously and in competition at the same active site. Although the small subunit is not catalytic it is essential for maximal activity. This Prochlorococcus marinus (strain MIT 9313) protein is Ribulose bisphosphate carboxylase small subunit.